We begin with the raw amino-acid sequence, 293 residues long: Glutamyl-Q tRNA(Asp) synthetase (293 aa).

Residues 8–12 and glutamate 44 each bind L-glutamate; that span reads RFAPT. Positions 11–21 match the 'HIGH' region motif; the sequence is PTPSGYLHFGS. Zn(2+) contacts are provided by cysteine 100, cysteine 102, tyrosine 114, and cysteine 118. L-glutamate-binding residues include tyrosine 171 and arginine 189. The 'KMSKS' region motif lies at 227–231; it reads KLGKS. Lysine 230 lines the ATP pocket.

Belongs to the class-I aminoacyl-tRNA synthetase family. GluQ subfamily. It depends on Zn(2+) as a cofactor.

Its function is as follows. Catalyzes the tRNA-independent activation of glutamate in presence of ATP and the subsequent transfer of glutamate onto a tRNA(Asp). Glutamate is transferred on the 2-amino-5-(4,5-dihydroxy-2-cyclopenten-1-yl) moiety of the queuosine in the wobble position of the QUC anticodon. The chain is Glutamyl-Q tRNA(Asp) synthetase from Pseudomonas paraeruginosa (strain DSM 24068 / PA7) (Pseudomonas aeruginosa (strain PA7)).